A 114-amino-acid polypeptide reads, in one-letter code: Somatostatin-1A (114 aa).

The N-terminal stretch at 1–24 (MLSTRIQCALALLSLALAVCSVSA) is a signal peptide. Residues 25-88 (APTDAKLRQL…KDEVRLELER (64 aa)) constitute a propeptide that is removed on maturation. Residues C103 and C114 are joined by a disulfide bond.

This sequence belongs to the somatostatin family.

The protein resides in the secreted. In terms of biological role, somatostatin inhibits the release of somatotropin. The chain is Somatostatin-1A (sst1a) from Carassius auratus (Goldfish).